Reading from the N-terminus, the 400-residue chain is Formate-dependent phosphoribosylglycinamide formyltransferase (400 aa).

Residues 22–23 and E82 contribute to the N(1)-(5-phospho-beta-D-ribosyl)glycinamide site; that span reads EL. Residues R115, K157, 162–167, 197–200, and E205 contribute to the ATP site; these read SSGKGQ and EGFI. The region spanning 120–315 is the ATP-grasp domain; that stretch reads RLAAETLGLP…EFELHARAIL (196 aa). Residues E274 and E286 each contribute to the Mg(2+) site. N(1)-(5-phospho-beta-D-ribosyl)glycinamide contacts are provided by residues D293, K362, and 369-370; that span reads RR.

The protein belongs to the PurK/PurT family. As to quaternary structure, homodimer.

The enzyme catalyses N(1)-(5-phospho-beta-D-ribosyl)glycinamide + formate + ATP = N(2)-formyl-N(1)-(5-phospho-beta-D-ribosyl)glycinamide + ADP + phosphate + H(+). The protein operates within purine metabolism; IMP biosynthesis via de novo pathway; N(2)-formyl-N(1)-(5-phospho-D-ribosyl)glycinamide from N(1)-(5-phospho-D-ribosyl)glycinamide (formate route): step 1/1. Its function is as follows. Involved in the de novo purine biosynthesis. Catalyzes the transfer of formate to 5-phospho-ribosyl-glycinamide (GAR), producing 5-phospho-ribosyl-N-formylglycinamide (FGAR). Formate is provided by PurU via hydrolysis of 10-formyl-tetrahydrofolate. The sequence is that of Formate-dependent phosphoribosylglycinamide formyltransferase from Cupriavidus metallidurans (strain ATCC 43123 / DSM 2839 / NBRC 102507 / CH34) (Ralstonia metallidurans).